Reading from the N-terminus, the 812-residue chain is Zn(2)-C6 fungal-type transcription factor pigI (812 aa).

Residues 42 to 74 form a disordered region; the sequence is GCLHPRSPPRDRTAMADNSNSSPPASRRREKPQ. A DNA-binding region (zn(2)-C6 fungal-type) is located at residues 77-105; it reads CTLCRRRKLRCDRRQPCETCVRRGLSLSC.

Its subcellular location is the nucleus. In terms of biological role, zn(2)-C6 fungal-type transcription factor; part of the gene cluster that mediates the biosynthesis of azaphilone pigments (MonAzPs), a complex mixture of compounds with a common azaphilone skeleton very widely used as food colorants. Acts probably as a negative regulator of the azaphilone pigments (MonAzPs) gene cluster. The chain is Zn(2)-C6 fungal-type transcription factor pigI from Monascus ruber (Mold).